Reading from the N-terminus, the 93-residue chain is Large ribosomal subunit protein bL27 (93 aa).

Positions 1-22 are disordered; it reads MAHKKAGGSSRNGRDSAGRRLG.

Belongs to the bacterial ribosomal protein bL27 family.

This is Large ribosomal subunit protein bL27 from Parvibaculum lavamentivorans (strain DS-1 / DSM 13023 / NCIMB 13966).